A 244-amino-acid polypeptide reads, in one-letter code: Ribonuclease HII (244 aa).

The RNase H type-2 domain occupies K23 to E236. 3 residues coordinate a divalent metal cation: D29, E30, and D130.

This sequence belongs to the RNase HII family. Mn(2+) serves as cofactor. It depends on Mg(2+) as a cofactor.

The protein localises to the cytoplasm. It catalyses the reaction Endonucleolytic cleavage to 5'-phosphomonoester.. In terms of biological role, endonuclease that specifically degrades the RNA of RNA-DNA hybrids. The polypeptide is Ribonuclease HII (Methanococcus vannielii (strain ATCC 35089 / DSM 1224 / JCM 13029 / OCM 148 / SB)).